Reading from the N-terminus, the 171-residue chain is NADH-quinone oxidoreductase subunit I 2 (171 aa).

4Fe-4S ferredoxin-type domains are found at residues Ile39–Ala71 and Glu81–Asp110. The [4Fe-4S] cluster site is built by Cys51, Cys54, Cys57, Cys61, Cys90, Cys93, Cys96, and Cys100.

Belongs to the complex I 23 kDa subunit family. As to quaternary structure, NDH-1 is composed of 14 different subunits. Subunits NuoA, H, J, K, L, M, N constitute the membrane sector of the complex. [4Fe-4S] cluster serves as cofactor.

The protein localises to the cell inner membrane. It carries out the reaction a quinone + NADH + 5 H(+)(in) = a quinol + NAD(+) + 4 H(+)(out). NDH-1 shuttles electrons from NADH, via FMN and iron-sulfur (Fe-S) centers, to quinones in the respiratory chain. The immediate electron acceptor for the enzyme in this species is believed to be ubiquinone. Couples the redox reaction to proton translocation (for every two electrons transferred, four hydrogen ions are translocated across the cytoplasmic membrane), and thus conserves the redox energy in a proton gradient. In Rhodopseudomonas palustris (strain BisB18), this protein is NADH-quinone oxidoreductase subunit I 2.